A 453-amino-acid polypeptide reads, in one-letter code: tRNA(Ile)-lysidine synthase (453 aa).

27-32 (SGGSDS) lines the ATP pocket.

It belongs to the tRNA(Ile)-lysidine synthase family.

It is found in the cytoplasm. It catalyses the reaction cytidine(34) in tRNA(Ile2) + L-lysine + ATP = lysidine(34) in tRNA(Ile2) + AMP + diphosphate + H(+). Its function is as follows. Ligates lysine onto the cytidine present at position 34 of the AUA codon-specific tRNA(Ile) that contains the anticodon CAU, in an ATP-dependent manner. Cytidine is converted to lysidine, thus changing the amino acid specificity of the tRNA from methionine to isoleucine. This chain is tRNA(Ile)-lysidine synthase, found in Rhizobium meliloti (strain 1021) (Ensifer meliloti).